The following is a 287-amino-acid chain: Diaminopimelate epimerase (287 aa).

Positions 15 and 66 each coordinate substrate. Catalysis depends on Cys75, which acts as the Proton donor. Residues 76–77 (GN), Asn170, Asn203, and 221–222 (ER) contribute to the substrate site. Cys230 serves as the catalytic Proton acceptor. Residue 231-232 (GT) participates in substrate binding.

This sequence belongs to the diaminopimelate epimerase family. As to quaternary structure, homodimer.

It localises to the cytoplasm. The enzyme catalyses (2S,6S)-2,6-diaminopimelate = meso-2,6-diaminopimelate. Its pathway is amino-acid biosynthesis; L-lysine biosynthesis via DAP pathway; DL-2,6-diaminopimelate from LL-2,6-diaminopimelate: step 1/1. In terms of biological role, catalyzes the stereoinversion of LL-2,6-diaminopimelate (L,L-DAP) to meso-diaminopimelate (meso-DAP), a precursor of L-lysine and an essential component of the bacterial peptidoglycan. The protein is Diaminopimelate epimerase of Desulfovibrio desulfuricans (strain ATCC 27774 / DSM 6949 / MB).